A 134-amino-acid polypeptide reads, in one-letter code: Small ribosomal subunit protein uS8 (134 aa).

It belongs to the universal ribosomal protein uS8 family. As to quaternary structure, part of the 30S ribosomal subunit. Contacts proteins S5 and S12.

In terms of biological role, one of the primary rRNA binding proteins, it binds directly to 16S rRNA central domain where it helps coordinate assembly of the platform of the 30S subunit. This Thermotoga maritima (strain ATCC 43589 / DSM 3109 / JCM 10099 / NBRC 100826 / MSB8) protein is Small ribosomal subunit protein uS8.